A 371-amino-acid polypeptide reads, in one-letter code: N-acetyldiaminopimelate deacetylase (371 aa).

Residue aspartate 68 is part of the active site. Catalysis depends on glutamate 127, which acts as the Proton acceptor.

The protein belongs to the peptidase M20A family. N-acetyldiaminopimelate deacetylase subfamily.

The catalysed reaction is N-acetyl-(2S,6S)-2,6-diaminopimelate + H2O = (2S,6S)-2,6-diaminopimelate + acetate. It functions in the pathway amino-acid biosynthesis; L-lysine biosynthesis via DAP pathway; LL-2,6-diaminopimelate from (S)-tetrahydrodipicolinate (acetylase route): step 3/3. Its function is as follows. Catalyzes the conversion of N-acetyl-diaminopimelate to diaminopimelate and acetate. This Listeria innocua serovar 6a (strain ATCC BAA-680 / CLIP 11262) protein is N-acetyldiaminopimelate deacetylase.